The sequence spans 207 residues: Large ribosomal subunit protein uL4 (207 aa).

The interval 48 to 85 (THKVKNRSEVRGGGRKPWRQKGTGRARQGSIRSPQWRG) is disordered. Residues 60 to 71 (GGRKPWRQKGTG) show a composition bias toward basic residues.

Belongs to the universal ribosomal protein uL4 family. Part of the 50S ribosomal subunit.

Functionally, one of the primary rRNA binding proteins, this protein initially binds near the 5'-end of the 23S rRNA. It is important during the early stages of 50S assembly. It makes multiple contacts with different domains of the 23S rRNA in the assembled 50S subunit and ribosome. In terms of biological role, forms part of the polypeptide exit tunnel. This is Large ribosomal subunit protein uL4 from Bacillus subtilis (strain 168).